The following is a 589-amino-acid chain: Probable methyltransferase PMT23 (589 aa).

Residues methionine 1–serine 4 lie on the Cytoplasmic side of the membrane. The helical; Signal-anchor for type II membrane protein transmembrane segment at valine 5–phenylalanine 25 threads the bilayer. The Lumenal portion of the chain corresponds to threonine 26 to arginine 589. Asparagine 70, asparagine 375, and asparagine 442 each carry an N-linked (GlcNAc...) asparagine glycan.

It belongs to the methyltransferase superfamily.

The protein resides in the golgi apparatus membrane. The protein is Probable methyltransferase PMT23 of Arabidopsis thaliana (Mouse-ear cress).